A 228-amino-acid chain; its full sequence is Phosphoglycolate phosphatase (228 aa).

D12 acts as the Nucleophile in catalysis. Positions 12, 14, and 177 each coordinate Mg(2+).

This sequence belongs to the HAD-like hydrolase superfamily. CbbY/CbbZ/Gph/YieH family. It depends on Mg(2+) as a cofactor.

It catalyses the reaction 2-phosphoglycolate + H2O = glycolate + phosphate. It participates in organic acid metabolism; glycolate biosynthesis; glycolate from 2-phosphoglycolate: step 1/1. Its function is as follows. Specifically catalyzes the dephosphorylation of 2-phosphoglycolate. Is involved in the dissimilation of the intracellular 2-phosphoglycolate formed during the DNA repair of 3'-phosphoglycolate ends, a major class of DNA lesions induced by oxidative stress. This chain is Phosphoglycolate phosphatase, found in Vibrio parahaemolyticus serotype O3:K6 (strain RIMD 2210633).